The chain runs to 840 residues: Probable inorganic carbon transporter subunit DabA 2 (840 aa).

Zn(2+) is bound by residues Cys356, Asp358, His540, and Cys555.

Belongs to the inorganic carbon transporter (TC 9.A.2) DabA family. Forms a complex with DabB. The cofactor is Zn(2+).

Its subcellular location is the cell inner membrane. Functionally, part of an energy-coupled inorganic carbon pump. In Bradyrhizobium sp. (strain ORS 278), this protein is Probable inorganic carbon transporter subunit DabA 2.